The primary structure comprises 380 residues: Cytochrome b (380 aa).

The next 4 membrane-spanning stretches (helical) occupy residues 34–54, 78–99, 114–134, and 179–199; these read FGSLLGICLLTQILTGLLLAM, WLIRNLHANGASFFFICIYLHI, WNTGVILLLTLMATAFVGYVL, and FFALHFLLPFMITGLTTIHLT. Positions 84 and 98 each coordinate heme b. Positions 183 and 197 each coordinate heme b. An a ubiquinone-binding site is contributed by His202. Transmembrane regions (helical) follow at residues 227-247, 289-309, 321-341, and 348-368; these read LKDFLGFTLMLLPLTTLALFS, LGGVLALAASVLILFLAPFLH, ISQLLFWILVTNLLILTWVGS, and FIIIGQLASITYFTILLILFP.

This sequence belongs to the cytochrome b family. As to quaternary structure, the cytochrome bc1 complex contains 11 subunits: 3 respiratory subunits (MT-CYB, CYC1 and UQCRFS1), 2 core proteins (UQCRC1 and UQCRC2) and 6 low-molecular weight proteins (UQCRH/QCR6, UQCRB/QCR7, UQCRQ/QCR8, UQCR10/QCR9, UQCR11/QCR10 and a cleavage product of UQCRFS1). This cytochrome bc1 complex then forms a dimer. Requires heme b as cofactor.

The protein localises to the mitochondrion inner membrane. In terms of biological role, component of the ubiquinol-cytochrome c reductase complex (complex III or cytochrome b-c1 complex) that is part of the mitochondrial respiratory chain. The b-c1 complex mediates electron transfer from ubiquinol to cytochrome c. Contributes to the generation of a proton gradient across the mitochondrial membrane that is then used for ATP synthesis. This Pelecanoides urinatrix (Common diving petrel) protein is Cytochrome b (MT-CYB).